A 158-amino-acid chain; its full sequence is PTS system fructose-specific EIIB component (158 aa).

The 98-residue stretch at 1–98 (MKLVAVTSCP…AEAVVQKAVE (98 aa)) folds into the PTS EIIB type-2 domain. Catalysis depends on cysteine 9, which acts as the Phosphocysteine intermediate. Cysteine 9 carries the phosphocysteine; by EIIA modification. Positions 104-147 (KTGSVTFGSGDDGEDADVGADDSSDDADAAESDEPVRRGGDPEK) are disordered. Acidic residues predominate over residues 114–136 (DDGEDADVGADDSSDDADAAESD). Residues 137-147 (EPVRRGGDPEK) are compositionally biased toward basic and acidic residues.

It localises to the cytoplasm. The catalysed reaction is D-fructose(out) + N(pros)-phospho-L-histidyl-[protein] = D-fructose 1-phosphate(in) + L-histidyl-[protein]. Functionally, the phosphoenolpyruvate-dependent sugar phosphotransferase system (sugar PTS), a major carbohydrate active transport system, catalyzes the phosphorylation of incoming sugar substrates concomitantly with their translocation across the cell membrane. The enzyme II PtfABC PTS system is involved in fructose transport. The polypeptide is PTS system fructose-specific EIIB component (Haloferax volcanii (strain ATCC 29605 / DSM 3757 / JCM 8879 / NBRC 14742 / NCIMB 2012 / VKM B-1768 / DS2) (Halobacterium volcanii)).